Reading from the N-terminus, the 379-residue chain is Probable malonyl-CoA-acyl carrier protein transacylase, mitochondrial (379 aa).

The N-terminal 23 residues, 1 to 23, are a transit peptide targeting the mitochondrion; sequence MLAARRLLRSPRITGALSWSRWS. Residues Ser-158 and His-275 contribute to the active site.

It belongs to the type II malonyltransferase family.

It is found in the mitochondrion. The catalysed reaction is holo-[ACP] + malonyl-CoA = malonyl-[ACP] + CoA. It participates in lipid metabolism; fatty acid biosynthesis. Its function is as follows. Catalyzes the transfer of a malonyl moiety from malonyl-CoA to the free thiol group of the phosphopantetheine arm of the ACP protein. This suggests the existence of the biosynthesis of fatty acids in mitochondria. In Drosophila melanogaster (Fruit fly), this protein is Probable malonyl-CoA-acyl carrier protein transacylase, mitochondrial.